The following is a 146-amino-acid chain: Hemoglobin cathodic subunit beta (146 aa).

Residues 2 to 146 enclose the Globin domain; that stretch reads EWSSSERSTI…LIHALSRQYF (145 aa). 2 residues coordinate heme b: H63 and H92.

It belongs to the globin family. Heterotetramer of two alpha chains and two beta chains. Red blood cells.

Involved in oxygen transport from gills to the various peripheral tissues. The sequence is that of Hemoglobin cathodic subunit beta from Gymnothorax unicolor (Brown moray).